Here is a 262-residue protein sequence, read N- to C-terminus: Hydroxyacylglutathione hydrolase (262 aa).

The Zn(2+) site is built by H53, H55, D57, H58, H111, D128, and H166.

This sequence belongs to the metallo-beta-lactamase superfamily. Glyoxalase II family. In terms of assembly, monomer. It depends on Zn(2+) as a cofactor.

The catalysed reaction is an S-(2-hydroxyacyl)glutathione + H2O = a 2-hydroxy carboxylate + glutathione + H(+). It participates in secondary metabolite metabolism; methylglyoxal degradation; (R)-lactate from methylglyoxal: step 2/2. Functionally, thiolesterase that catalyzes the hydrolysis of S-D-lactoyl-glutathione to form glutathione and D-lactic acid. This Nitrosomonas europaea (strain ATCC 19718 / CIP 103999 / KCTC 2705 / NBRC 14298) protein is Hydroxyacylglutathione hydrolase.